A 186-amino-acid polypeptide reads, in one-letter code: Ribosome-recycling factor (186 aa).

This sequence belongs to the RRF family.

Its subcellular location is the cytoplasm. Responsible for the release of ribosomes from messenger RNA at the termination of protein biosynthesis. May increase the efficiency of translation by recycling ribosomes from one round of translation to another. The protein is Ribosome-recycling factor of Rickettsia massiliae (strain Mtu5).